The following is a 160-amino-acid chain: MITLGIDPGFARCGYAFIEAKNSAYKIVDSGLIETFQNQEYNQRLSFIYTQLDELIKKYKPNNAAIEELFFSKNTKTAIKVAEARGVIILALTLNNIEFQEYKPKEVKSQITGNGNANKDAMMKMVNLFTGSNIIQDDTADAVAIALAHASRNRIFNDIK.

Catalysis depends on residues D7, E67, and D138. 3 residues coordinate Mg(2+): D7, E67, and D138.

It belongs to the RuvC family. In terms of assembly, homodimer which binds Holliday junction (HJ) DNA. The HJ becomes 2-fold symmetrical on binding to RuvC with unstacked arms; it has a different conformation from HJ DNA in complex with RuvA. In the full resolvosome a probable DNA-RuvA(4)-RuvB(12)-RuvC(2) complex forms which resolves the HJ. Requires Mg(2+) as cofactor.

The protein resides in the cytoplasm. The catalysed reaction is Endonucleolytic cleavage at a junction such as a reciprocal single-stranded crossover between two homologous DNA duplexes (Holliday junction).. The RuvA-RuvB-RuvC complex processes Holliday junction (HJ) DNA during genetic recombination and DNA repair. Endonuclease that resolves HJ intermediates. Cleaves cruciform DNA by making single-stranded nicks across the HJ at symmetrical positions within the homologous arms, yielding a 5'-phosphate and a 3'-hydroxyl group; requires a central core of homology in the junction. The consensus cleavage sequence is 5'-(A/T)TT(C/G)-3'. Cleavage occurs on the 3'-side of the TT dinucleotide at the point of strand exchange. HJ branch migration catalyzed by RuvA-RuvB allows RuvC to scan DNA until it finds its consensus sequence, where it cleaves and resolves the cruciform DNA. In Brachyspira hyodysenteriae (strain ATCC 49526 / WA1), this protein is Crossover junction endodeoxyribonuclease RuvC.